We begin with the raw amino-acid sequence, 432 residues long: Glutamyl-tRNA reductase (432 aa).

Substrate-binding positions include 49-52, Ser-107, 112-114, and Gln-118; these read TCNR and ETQ. The active-site Nucleophile is Cys-50. Residue 186–191 coordinates NADP(+); it reads GAGEMG.

It belongs to the glutamyl-tRNA reductase family. In terms of assembly, homodimer.

The catalysed reaction is (S)-4-amino-5-oxopentanoate + tRNA(Glu) + NADP(+) = L-glutamyl-tRNA(Glu) + NADPH + H(+). It functions in the pathway porphyrin-containing compound metabolism; protoporphyrin-IX biosynthesis; 5-aminolevulinate from L-glutamyl-tRNA(Glu): step 1/2. Catalyzes the NADPH-dependent reduction of glutamyl-tRNA(Glu) to glutamate 1-semialdehyde (GSA). In Campylobacter jejuni (strain RM1221), this protein is Glutamyl-tRNA reductase.